The primary structure comprises 581 residues: Transcription activator GAGA (581 aa).

The BTB domain occupies 34-99 (VDCTLAAGGR…VYRGEVSVDH (66 aa)). The interaction with E(bx) stretch occupies residues 201–397 (VIQAFLPARK…SSGSGSGALS (197 aa)). Thr-237 is modified (phosphothreonine). Disordered stretches follow at residues 298-343 (ITPA…EQPA) and 364-404 (LRHF…SVPQ). The C2H2-type; degenerate zinc-finger motif lies at 343–366 (ATCPICYAVIRQSRNLRRHLELRH). The span at 381–401 (GKKSSSGSSGSGSGALSSSGS) shows a compositional bias: low complexity.

Interacts with Bin1, lolal, corto, ttk and ph-p. Interacts with FACT subunits Ssrp and dre4/SPT16. Interacts with E(bx). Upon ecdysone stimulation, interacts with Nup98. Post-translationally, the N-terminus is blocked. As to expression, expressed in the central nervous system throughout development.

It localises to the nucleus. The protein localises to the chromosome. In terms of biological role, transcriptional activator that functions by regulating chromatin structure. Overcomes the repressive effects of chromatin by promoting the open chromatin conformation in promoter gene regions, thereby allowing access to other transcription factors. Binds to DNA Polycomb response elements (PREs) at the bithorax complex and to the proximal region of the engrailed promoter, and positively regulates transcription of many genes including homeotic ones. Involved in zygotic genome activation (ZGA), a critical event in early embryonic development during which the developmental control passes from maternally provided mRNAs to the expression of the zygotic genome after fertilization. Binds to the DNA sequence (GA)n, with optimal binding to the pentamer 5'-GAGAG-3'. Binds DNA as an oligomer. May also act as a transcriptional repressor, maintaining the repressed state of genes including lolal, and down-regulating its own transcription. Required for dosage compensation in males and may be involved in oogenesis. Also has a role in nuclear division. The polypeptide is Transcription activator GAGA (Trl) (Drosophila melanogaster (Fruit fly)).